We begin with the raw amino-acid sequence, 60 residues long: Large ribosomal subunit protein bL32 (60 aa).

Residues 1 to 60 (MAVQQVKKSRSKRDMRRSHDSLTNPTLSTDKSTGELHLRHHVSPNGFYKGRKVVDTKSED) are disordered. Basic residues predominate over residues 7 to 16 (KKSRSKRDMR). The span at 22–31 (LTNPTLSTDK) shows a compositional bias: polar residues.

Belongs to the bacterial ribosomal protein bL32 family.

The polypeptide is Large ribosomal subunit protein bL32 (Francisella tularensis subsp. holarctica (strain LVS)).